Here is a 373-residue protein sequence, read N- to C-terminus: sn-glycerol-3-phosphate import ATP-binding protein UgpC (373 aa).

The ABC transporter domain occupies 4–235 (LTLSNITKSY…PASVFVATFI (232 aa)). 37–44 (GPSGCGKS) lines the ATP pocket.

It belongs to the ABC transporter superfamily. sn-glycerol-3-phosphate importer (TC 3.A.1.1.3) family. The complex is composed of two ATP-binding proteins (UgpC), two transmembrane proteins (UgpA and UgpE) and a solute-binding protein (UgpB).

Its subcellular location is the cell inner membrane. The catalysed reaction is sn-glycerol 3-phosphate(out) + ATP + H2O = sn-glycerol 3-phosphate(in) + ADP + phosphate + H(+). Part of the ABC transporter complex UgpBAEC involved in sn-glycerol-3-phosphate (G3P) import. Responsible for energy coupling to the transport system. This chain is sn-glycerol-3-phosphate import ATP-binding protein UgpC, found in Psychromonas ingrahamii (strain DSM 17664 / CCUG 51855 / 37).